Reading from the N-terminus, the 288-residue chain is MSNLKQLRTRIKSVKSTQKITKAMQLVSASKMAKIKSQIANSNFYIEAISKMMSDILSIDMYELSIEEQKFFNTIPNKANLLIVMASQRGLCGTFNYSIIKQVKNDIKELENKGEQIKLIIIGKKGYEALKRQYANYIDSYFELPKIHDENLMLQVKQKIMSAVENLEVSNCVIYFNKFKNAMTQIMTRQQILPIEKYHDDSKVDDDYYEYEGENLISNLINLYVNSQINYALLQSRASEEGARMTAMENATNNANDLISKLVLKLNRSRQAIITTELIEIIAGSEAV.

The protein belongs to the ATPase gamma chain family. As to quaternary structure, F-type ATPases have 2 components, CF(1) - the catalytic core - and CF(0) - the membrane proton channel. CF(1) has five subunits: alpha(3), beta(3), gamma(1), delta(1), epsilon(1). CF(0) has three main subunits: a, b and c.

It is found in the cell inner membrane. Its function is as follows. Produces ATP from ADP in the presence of a proton gradient across the membrane. The gamma chain is believed to be important in regulating ATPase activity and the flow of protons through the CF(0) complex. This Rickettsia felis (strain ATCC VR-1525 / URRWXCal2) (Rickettsia azadi) protein is ATP synthase gamma chain.